We begin with the raw amino-acid sequence, 378 residues long: Ribosomal RNA large subunit methyltransferase G (378 aa).

The protein belongs to the methyltransferase superfamily. RlmG family.

The protein localises to the cytoplasm. It carries out the reaction guanosine(1835) in 23S rRNA + S-adenosyl-L-methionine = N(2)-methylguanosine(1835) in 23S rRNA + S-adenosyl-L-homocysteine + H(+). Specifically methylates the guanine in position 1835 (m2G1835) of 23S rRNA. This Shewanella sp. (strain W3-18-1) protein is Ribosomal RNA large subunit methyltransferase G.